Consider the following 266-residue polypeptide: 3-methyl-2-oxobutanoate hydroxymethyltransferase (266 aa).

Mg(2+) is bound by residues aspartate 45 and aspartate 84. 3-methyl-2-oxobutanoate contacts are provided by residues aspartate 45–serine 46, aspartate 84, and lysine 112. Glutamate 114 lines the Mg(2+) pocket. Glutamate 181 serves as the catalytic Proton acceptor.

This sequence belongs to the PanB family. As to quaternary structure, homodecamer; pentamer of dimers. It depends on Mg(2+) as a cofactor.

It localises to the cytoplasm. It catalyses the reaction 3-methyl-2-oxobutanoate + (6R)-5,10-methylene-5,6,7,8-tetrahydrofolate + H2O = 2-dehydropantoate + (6S)-5,6,7,8-tetrahydrofolate. The protein operates within cofactor biosynthesis; (R)-pantothenate biosynthesis; (R)-pantoate from 3-methyl-2-oxobutanoate: step 1/2. Its function is as follows. Catalyzes the reversible reaction in which hydroxymethyl group from 5,10-methylenetetrahydrofolate is transferred onto alpha-ketoisovalerate to form ketopantoate. This Stutzerimonas stutzeri (strain A1501) (Pseudomonas stutzeri) protein is 3-methyl-2-oxobutanoate hydroxymethyltransferase.